We begin with the raw amino-acid sequence, 68 residues long: Arabinogalactan peptide 1 (68 aa).

Positions 1–30 (MAGQLKSKIVAVAVAAVVVVASSLVGTASA) are cleaved as a signal peptide. The GPI-anchor amidated serine moiety is linked to residue S40. A propeptide spans 41 to 68 (GATATAAAAPAFAAVSVAAAALGGYLFC) (removed in mature form).

The protein belongs to the AG-peptide AGP family. O-glycosylated on hydroxyprolines; noncontiguous hydroxylproline residues are glycosylated with arabinogalactan. Expressed in roots, stems, flowers and seeds.

It is found in the vacuole. The protein resides in the aleurone grain membrane. Functionally, proteoglycan that seems to be implicated in diverse developmental roles such as differentiation, cell-cell recognition, embryogenesis and programmed cell death. This is Arabinogalactan peptide 1 (AGPEP1) from Oryza sativa subsp. japonica (Rice).